Reading from the N-terminus, the 531-residue chain is SWI/SNF-related matrix-associated actin-dependent regulator of chromatin subfamily D member 2 (531 aa).

Asymmetric dimethylarginine occurs at positions 81 and 104. S203 is subject to Phosphoserine. A disordered region spans residues 205–226 (SKAEGDSAGTAGTPGGTPAGDK). Phosphothreonine is present on T217. K226 participates in a covalent cross-link: Glycyl lysine isopeptide (Lys-Gly) (interchain with G-Cter in SUMO2). Positions 306–383 (HQPPQYKLDP…PMKLAGLLQH (78 aa)) constitute an SWIB/MDM2 domain.

It belongs to the SMARCD family. Component of the multiprotein chromatin-remodeling complexes SWI/SNF: SWI/SNF-A (BAF), SWI/SNF-B (PBAF) and related complexes. The canonical complex contains a catalytic subunit (either SMARCA4/BRG1/BAF190A or SMARCA2/BRM/BAF190B), and at least SMARCE1, ACTL6A/BAF53, SMARCC1/BAF155, SMARCC2/BAF170, and SMARCB1/SNF5/BAF47. Other subunits specific to each of the complexes may also be present permitting several possible combinations developmentally and tissue specific. Component of the BAF complex, which includes at least actin (ACTB), ARID1A/BAF250A, ARID1B/BAF250B, SMARCA2/BRM, SMARCA4/BRG1, ACTL6A/BAF53, ACTL6B/BAF53B, SMARCE1/BAF57, SMARCC1/BAF155, SMARCC2/BAF170, SMARCB1/SNF5/INI1, and one or more SMARCD1/BAF60A, SMARCD2/BAF60B, or SMARCD3/BAF60C. In muscle cells, the BAF complex also contains DPF3. Component of the SWI/SNF-B (PBAF) chromatin remodeling complex, at least composed of SMARCA4/BRG1, SMARCB1/BAF47/SNF5, ACTL6A/BAF53A or ACTL6B/BAF53B, SMARCE1/BAF57, SMARCD1/BAF60A, SMARCD2/BAF60B, perhaps SMARCD3/BAF60C, SMARCC1/BAF155, SMARCC2/BAF170, PBRM1/BAF180, ARID2/BAF200 and actin (ACTB). Interacts with UNKL. Interacts with CEBPE. Ubiquitinated through a signaling process involving RAC1 and the RING finger protein UNKL. In terms of tissue distribution, isoform 2 is expressed in the pancreas.

It localises to the nucleus. Its function is as follows. Involved in transcriptional activation and repression of select genes by chromatin remodeling (alteration of DNA-nucleosome topology). Component of SWI/SNF chromatin remodeling complexes that carry out key enzymatic activities, changing chromatin structure by altering DNA-histone contacts within a nucleosome in an ATP-dependent manner. Critical regulator of myeloid differentiation, controlling granulocytopoiesis and the expression of genes involved in neutrophil granule formation. This is SWI/SNF-related matrix-associated actin-dependent regulator of chromatin subfamily D member 2 (SMARCD2) from Homo sapiens (Human).